Reading from the N-terminus, the 99-residue chain is Large ribosomal subunit protein eL30 (99 aa).

Belongs to the eukaryotic ribosomal protein eL30 family.

This Methanosarcina acetivorans (strain ATCC 35395 / DSM 2834 / JCM 12185 / C2A) protein is Large ribosomal subunit protein eL30.